A 294-amino-acid chain; its full sequence is Transcription repressor OFP14 (294 aa).

Over residues 49–60 (SFKHRRRSSKTR) the composition is skewed to basic residues. 3 disordered regions span residues 49–72 (SFKH…HQDS), 96–129 (DDQE…DDDD), and 141–185 (AVYD…SRST). Composition is skewed to basic and acidic residues over residues 61-72 (FSKEEPVYHQDS) and 96-117 (DDQE…RESS). The segment covering 118–128 (SDDSDDDDDDD) has biased composition (acidic residues). The segment covering 164–185 (SSEGRPSMETTSTSSERQSRST) has biased composition (low complexity). In terms of domain architecture, OVATE spans 195 to 259 (VLRYTDEPQE…LSAFVDLIIA (65 aa)).

As to quaternary structure, interacts with KNAT2 and KNAT3. Expressed in roots, rosette and cauline leaves, shoots, stems, flower buds and siliques.

It is found in the nucleus. Functionally, transcriptional repressor that may regulate multiple aspects of plant growth and development through the regulation of BEL1-LIKE (BLH) and KNOX TALE (KNAT) homeodomain transcription factors. The polypeptide is Transcription repressor OFP14 (OFP14) (Arabidopsis thaliana (Mouse-ear cress)).